A 360-amino-acid chain; its full sequence is Threonine synthase (360 aa).

The residue at position 69 (K69) is an N6-(pyridoxal phosphate)lysine. Pyridoxal 5'-phosphate is bound by residues N95, 196-200, and T326; that span reads GNAGN.

The protein belongs to the threonine synthase family. In terms of assembly, homodimer. It depends on pyridoxal 5'-phosphate as a cofactor.

It catalyses the reaction O-phospho-L-homoserine + H2O = L-threonine + phosphate. It participates in amino-acid biosynthesis; L-threonine biosynthesis; L-threonine from L-aspartate: step 5/5. Catalyzes the gamma-elimination of phosphate from L-phosphohomoserine and the beta-addition of water to produce L-threonine. The protein is Threonine synthase (thrC) of Mycobacterium leprae (strain TN).